Reading from the N-terminus, the 360-residue chain is UDP-N-acetylglucosamine--N-acetylmuramyl-(pentapeptide) pyrophosphoryl-undecaprenol N-acetylglucosamine transferase (360 aa).

UDP-N-acetyl-alpha-D-glucosamine is bound by residues 12–14, Ser198, and Gln289; that span reads TAG.

This sequence belongs to the glycosyltransferase 28 family. MurG subfamily.

The protein resides in the cell membrane. The catalysed reaction is Mur2Ac(oyl-L-Ala-gamma-D-Glu-L-Lys-D-Ala-D-Ala)-di-trans,octa-cis-undecaprenyl diphosphate + UDP-N-acetyl-alpha-D-glucosamine = beta-D-GlcNAc-(1-&gt;4)-Mur2Ac(oyl-L-Ala-gamma-D-Glu-L-Lys-D-Ala-D-Ala)-di-trans,octa-cis-undecaprenyl diphosphate + UDP + H(+). It functions in the pathway cell wall biogenesis; peptidoglycan biosynthesis. Cell wall formation. Catalyzes the transfer of a GlcNAc subunit on undecaprenyl-pyrophosphoryl-MurNAc-pentapeptide (lipid intermediate I) to form undecaprenyl-pyrophosphoryl-MurNAc-(pentapeptide)GlcNAc (lipid intermediate II). In Streptococcus equi subsp. zooepidemicus (strain H70), this protein is UDP-N-acetylglucosamine--N-acetylmuramyl-(pentapeptide) pyrophosphoryl-undecaprenol N-acetylglucosamine transferase.